The chain runs to 236 residues: Rab-like protein 3 (236 aa).

The interval 1-236 (MASLDRVKVL…AGTLKSLHYD (236 aa)) is small GTPase-like. Residues 16–21 (GVGKSS), 148–150 (KLD), and 179–180 (DC) each bind GTP.

It belongs to the small GTPase superfamily. Rab family. In terms of assembly, homodimer. Interacts with GPR89; the interaction stabilizes GPR89. Interacts with RAP1GDS1.

Required for KRAS signaling regulation and modulation of cell proliferation. Regulator of KRAS prenylation, and probably prenylation of other small GTPases. Required for lymphocyte development and function. Not required for myeloid cell development. This Homo sapiens (Human) protein is Rab-like protein 3 (RABL3).